We begin with the raw amino-acid sequence, 61 residues long: Small ribosomal subunit protein uS14 (61 aa).

Zn(2+)-binding residues include C24, C27, C40, and C43.

This sequence belongs to the universal ribosomal protein uS14 family. Zinc-binding uS14 subfamily. As to quaternary structure, part of the 30S ribosomal subunit. Contacts proteins S3 and S10. The cofactor is Zn(2+).

Functionally, binds 16S rRNA, required for the assembly of 30S particles and may also be responsible for determining the conformation of the 16S rRNA at the A site. This chain is Small ribosomal subunit protein uS14, found in Nitratidesulfovibrio vulgaris (strain ATCC 29579 / DSM 644 / CCUG 34227 / NCIMB 8303 / VKM B-1760 / Hildenborough) (Desulfovibrio vulgaris).